Here is a 368-residue protein sequence, read N- to C-terminus: 4-hydroxy-3-methylbut-2-en-1-yl diphosphate synthase (flavodoxin) (368 aa).

Positions 271, 274, 306, and 313 each coordinate [4Fe-4S] cluster.

Belongs to the IspG family. Requires [4Fe-4S] cluster as cofactor.

It carries out the reaction (2E)-4-hydroxy-3-methylbut-2-enyl diphosphate + oxidized [flavodoxin] + H2O + 2 H(+) = 2-C-methyl-D-erythritol 2,4-cyclic diphosphate + reduced [flavodoxin]. The protein operates within isoprenoid biosynthesis; isopentenyl diphosphate biosynthesis via DXP pathway; isopentenyl diphosphate from 1-deoxy-D-xylulose 5-phosphate: step 5/6. Converts 2C-methyl-D-erythritol 2,4-cyclodiphosphate (ME-2,4cPP) into 1-hydroxy-2-methyl-2-(E)-butenyl 4-diphosphate. The chain is 4-hydroxy-3-methylbut-2-en-1-yl diphosphate synthase (flavodoxin) from Histophilus somni (strain 129Pt) (Haemophilus somnus).